The chain runs to 344 residues: Phosphate acyltransferase (344 aa).

It belongs to the PlsX family. As to quaternary structure, homodimer. Probably interacts with PlsY.

The protein resides in the cytoplasm. It catalyses the reaction a fatty acyl-[ACP] + phosphate = an acyl phosphate + holo-[ACP]. Its pathway is lipid metabolism; phospholipid metabolism. Catalyzes the reversible formation of acyl-phosphate (acyl-PO(4)) from acyl-[acyl-carrier-protein] (acyl-ACP). This enzyme utilizes acyl-ACP as fatty acyl donor, but not acyl-CoA. In Cyanothece sp. (strain PCC 7425 / ATCC 29141), this protein is Phosphate acyltransferase.